A 384-amino-acid chain; its full sequence is S-adenosylmethionine synthase (384 aa).

Residue H15 participates in ATP binding. D17 serves as a coordination point for Mg(2+). E43 is a K(+) binding site. Residues E56 and Q99 each contribute to the L-methionine site. Residues 99–109 (QSPDINQGVDR) form a flexible loop region. Residues 164–166 (DAK), 230–231 (RF), D239, 245–246 (RK), A262, and K266 contribute to the ATP site. D239 lines the L-methionine pocket. Residue K270 coordinates L-methionine.

This sequence belongs to the AdoMet synthase family. As to quaternary structure, homotetramer; dimer of dimers. Mg(2+) serves as cofactor. The cofactor is K(+).

The protein localises to the cytoplasm. It catalyses the reaction L-methionine + ATP + H2O = S-adenosyl-L-methionine + phosphate + diphosphate. The protein operates within amino-acid biosynthesis; S-adenosyl-L-methionine biosynthesis; S-adenosyl-L-methionine from L-methionine: step 1/1. Catalyzes the formation of S-adenosylmethionine (AdoMet) from methionine and ATP. The overall synthetic reaction is composed of two sequential steps, AdoMet formation and the subsequent tripolyphosphate hydrolysis which occurs prior to release of AdoMet from the enzyme. This is S-adenosylmethionine synthase from Shigella boydii serotype 18 (strain CDC 3083-94 / BS512).